The following is a 272-amino-acid chain: uncharacterized protein (272 aa).

Residues 1–27 (MDTLAFINRALVEEGYSLKDIKLVLIT) enclose the HTH merR-type domain.

This is an uncharacterized protein from Aquifex aeolicus (strain VF5).